Here is a 366-residue protein sequence, read N- to C-terminus: Growth hormone secretagogue receptor type 1 (366 aa).

Residues 1–40 (MWNATPSEEPGPNLTLPDLGWDAPPENDSLVEELLPLFPT) are Extracellular-facing. N-linked (GlcNAc...) asparagine glycans are attached at residues Asn13 and Asn27. A helical membrane pass occupies residues 41 to 66 (PLLAGVTATCVALFVVGIAGNLLTML). Residues 67–72 (VVSRFR) lie on the Cytoplasmic side of the membrane. Residues 73–96 (EMRTTTNLYLSSMAFSDLLIFLCM) traverse the membrane as a helical segment. Topologically, residues 97-117 (PLDLFRLWQYRPWNLGNLLCK) are extracellular. A disulfide bond links Cys116 and Cys198. The chain crosses the membrane as a helical span at residues 118 to 139 (LFQFVSESCTYATVLTITALSV). Topologically, residues 140-162 (ERYFAICFPLRAKVVVTKGRVKL) are cytoplasmic. The chain crosses the membrane as a helical span at residues 163-183 (VILVIWAVAFCSAGPIFVLVG). Residues 184–211 (VEHDNGTDPRDTNECRATEFAVRSGLLT) lie on the Extracellular side of the membrane. A helical transmembrane segment spans residues 212-235 (VMVWVSSVFFFLPVFCLTVLYSLI). At 236 to 263 (GRKLWRRKRGEAAVGSSLRDQNHKQTVK) the chain is on the cytoplasmic side. The helical transmembrane segment at 264–285 (MLAVVVFAFILCWLPFHVGRYL) threads the bilayer. Residues 286-302 (FSKSLEPGSVEIAQISQ) lie on the Extracellular side of the membrane. Residues 303–326 (YCNLVSFVLFYLSAAINPILYNIM) traverse the membrane as a helical segment. At 327–366 (SKKYRVAVFKLLGFEPFSQRKLSTLKDESSRAWTESSINT) the chain is on the cytoplasmic side.

Belongs to the G-protein coupled receptor 1 family. In terms of tissue distribution, pituitary and hypothalamus.

It is found in the cell membrane. Functionally, receptor for ghrelin, coupled to G-alpha-11 proteins. Stimulates growth hormone secretion. Also binds other growth hormone releasing peptides (GHRP) (e.g. Met-enkephalin and GHRP-6) as well as non-peptide, low molecular weight secretagogues (e.g. L-692,429, MK-0677, adenosine). This chain is Growth hormone secretagogue receptor type 1 (GHSR), found in Sus scrofa (Pig).